We begin with the raw amino-acid sequence, 500 residues long: Glycogen synthase (500 aa).

Lys-15 serves as a coordination point for ADP-alpha-D-glucose.

The protein belongs to the glycosyltransferase 1 family. Bacterial/plant glycogen synthase subfamily.

The catalysed reaction is [(1-&gt;4)-alpha-D-glucosyl](n) + ADP-alpha-D-glucose = [(1-&gt;4)-alpha-D-glucosyl](n+1) + ADP + H(+). It participates in glycan biosynthesis; glycogen biosynthesis. In terms of biological role, synthesizes alpha-1,4-glucan chains using ADP-glucose. The sequence is that of Glycogen synthase from Protochlamydia amoebophila (strain UWE25).